The following is a 721-amino-acid chain: Polyribonucleotide nucleotidyltransferase (721 aa).

Mg(2+) is bound by residues Asp-495 and Asp-501. In terms of domain architecture, KH spans 562-621 (PRITTIKIRPERIKDIIGPGGKTIKDITARTGTSINIEDDGSVSIASPNQDKVEEAIKMI). In terms of domain architecture, S1 motif spans 631–699 (GRIYMGTVRK…RSGKIRLSRK (69 aa)). The interval 699-721 (KEALADSAKKSEGTEPPKGEPAK) is disordered.

Belongs to the polyribonucleotide nucleotidyltransferase family. The cofactor is Mg(2+).

It localises to the cytoplasm. It carries out the reaction RNA(n+1) + phosphate = RNA(n) + a ribonucleoside 5'-diphosphate. Its function is as follows. Involved in mRNA degradation. Catalyzes the phosphorolysis of single-stranded polyribonucleotides processively in the 3'- to 5'-direction. This is Polyribonucleotide nucleotidyltransferase from Anaeromyxobacter dehalogenans (strain 2CP-C).